Consider the following 157-residue polypeptide: Transcription elongation factor GreA (157 aa).

The stretch at 14–37 forms a coiled coil; the sequence is LRKELERLLKRRPLITEAIAEARE.

This sequence belongs to the GreA/GreB family.

Functionally, necessary for efficient RNA polymerase transcription elongation past template-encoded arresting sites. The arresting sites in DNA have the property of trapping a certain fraction of elongating RNA polymerases that pass through, resulting in locked ternary complexes. Cleavage of the nascent transcript by cleavage factors such as GreA or GreB allows the resumption of elongation from the new 3'terminus. GreA releases sequences of 2 to 3 nucleotides. The chain is Transcription elongation factor GreA from Vibrio vulnificus (strain CMCP6).